The following is a 151-amino-acid chain: Large ribosomal subunit protein bL9 (151 aa).

It belongs to the bacterial ribosomal protein bL9 family.

Its function is as follows. Binds to the 23S rRNA. This Thermosipho melanesiensis (strain DSM 12029 / CIP 104789 / BI429) protein is Large ribosomal subunit protein bL9.